A 366-amino-acid polypeptide reads, in one-letter code: tRNA/tmRNA (uracil-C(5))-methyltransferase (366 aa).

Positions 190, 218, 223, 239, and 299 each coordinate S-adenosyl-L-methionine. Cys324 serves as the catalytic Nucleophile. Glu358 (proton acceptor) is an active-site residue.

The protein belongs to the class I-like SAM-binding methyltransferase superfamily. RNA M5U methyltransferase family. TrmA subfamily.

It carries out the reaction uridine(54) in tRNA + S-adenosyl-L-methionine = 5-methyluridine(54) in tRNA + S-adenosyl-L-homocysteine + H(+). It catalyses the reaction uridine(341) in tmRNA + S-adenosyl-L-methionine = 5-methyluridine(341) in tmRNA + S-adenosyl-L-homocysteine + H(+). Dual-specificity methyltransferase that catalyzes the formation of 5-methyluridine at position 54 (m5U54) in all tRNAs, and that of position 341 (m5U341) in tmRNA (transfer-mRNA). The chain is tRNA/tmRNA (uracil-C(5))-methyltransferase from Escherichia coli (strain ATCC 8739 / DSM 1576 / NBRC 3972 / NCIMB 8545 / WDCM 00012 / Crooks).